The primary structure comprises 633 residues: Chaperone protein DnaK (633 aa).

T198 carries the post-translational modification Phosphothreonine; by autocatalysis.

This sequence belongs to the heat shock protein 70 family.

In terms of biological role, acts as a chaperone. This is Chaperone protein DnaK from Rhodopseudomonas palustris (strain BisA53).